The primary structure comprises 3587 residues: Tyrocidine synthase 2 (3587 aa).

Residues 466 to 1045 form a domain 1 (Proline-activating) region; sequence AATMHELFSR…IQALAAYVEG (580 aa). 2 consecutive Carrier domains span residues 972 to 1047 and 2007 to 2082; these read APTT…EGGE and APAT…EHSE. O-(pantetheine 4'-phosphoryl)serine occurs at positions 1007 and 2042. Residues 1522 to 2081 form a domain 2 (Phenylalanine-activating) region; sequence EQTAVVFGDK…RDLARLIEHS (560 aa). Positions 2540-3122 are domain 3 (D-phenylalanine-activating); that stretch reads YRADQTIQQL…NSRESEQGVV (583 aa). Residues 3017 to 3040 are disordered; that stretch reads NDKIDRKALPKPNQEENRTEQYAA. A compositionally biased stretch (basic and acidic residues) spans 3018-3035; that stretch reads DKIDRKALPKPNQEENRT. Residues 3040–3114 form the Carrier 3 domain; that stretch reads APQTELEQLL…EAALRVIPNS (75 aa). An O-(pantetheine 4'-phosphoryl)serine modification is found at Ser3075.

Belongs to the ATP-dependent AMP-binding enzyme family. Large multienzyme complex of TycA, TycB and TycC. Pantetheine 4'-phosphate serves as cofactor.

It carries out the reaction L-phenylalanine + ATP + H2O = D-phenylalanine + AMP + diphosphate + H(+). The protein operates within antibiotic biosynthesis; tyrocidine biosynthesis. Activates the second to fourth amino acids in tyrocidine (in tyrocidine A, Pro, Phe, and D-Phe) and epimerizes the last one. This Brevibacillus parabrevis protein is Tyrocidine synthase 2 (tycB).